A 288-amino-acid chain; its full sequence is Pantothenate synthetase (288 aa).

30-37 (MGNLHEGH) is a binding site for ATP. Residue histidine 37 is the Proton donor of the active site. Glutamine 61 contributes to the (R)-pantoate binding site. Residue glutamine 61 coordinates beta-alanine. 148 to 151 (GQKD) is an ATP binding site. Glutamine 154 is a binding site for (R)-pantoate. Residues valine 177 and 185-188 (LSSR) contribute to the ATP site.

Belongs to the pantothenate synthetase family. Homodimer.

It localises to the cytoplasm. It carries out the reaction (R)-pantoate + beta-alanine + ATP = (R)-pantothenate + AMP + diphosphate + H(+). It functions in the pathway cofactor biosynthesis; (R)-pantothenate biosynthesis; (R)-pantothenate from (R)-pantoate and beta-alanine: step 1/1. Functionally, catalyzes the condensation of pantoate with beta-alanine in an ATP-dependent reaction via a pantoyl-adenylate intermediate. This chain is Pantothenate synthetase, found in Psychrobacter arcticus (strain DSM 17307 / VKM B-2377 / 273-4).